Consider the following 437-residue polypeptide: Methionine aminopeptidase 2 (437 aa).

Residues 1-90 (MAAQAAPAEE…LFPNNQYPKG (90 aa)) are disordered. The span at 10 to 20 (ELSKLSVDETK) shows a compositional bias: basic and acidic residues. Residues 31 to 42 (SDAESGDEEAEE) show a composition bias toward acidic residues. Basic residues predominate over residues 52 to 66 (AKKKKKRKPKKKKKA). Substrate is bound at residue H190. A divalent metal cation-binding residues include D210, D221, and H290. Residue H298 coordinates substrate. Residues E323 and E418 each contribute to the a divalent metal cation site.

It belongs to the peptidase M24A family. Methionine aminopeptidase eukaryotic type 2 subfamily. Co(2+) serves as cofactor. Zn(2+) is required as a cofactor. The cofactor is Mn(2+). It depends on Fe(2+) as a cofactor.

The protein resides in the cytoplasm. The catalysed reaction is Release of N-terminal amino acids, preferentially methionine, from peptides and arylamides.. Cotranslationally removes the N-terminal methionine from nascent proteins. The N-terminal methionine is often cleaved when the second residue in the primary sequence is small and uncharged (Met-Ala-, Cys, Gly, Pro, Ser, Thr, or Val). The chain is Methionine aminopeptidase 2 from Neurospora crassa (strain ATCC 24698 / 74-OR23-1A / CBS 708.71 / DSM 1257 / FGSC 987).